Here is a 492-residue protein sequence, read N- to C-terminus: Trehalose-6-phosphate synthase (492 aa).

R25 provides a ligand contact to D-glucose 6-phosphate. A UDP-alpha-D-glucose-binding site is contributed by G45–G46. Residues Y101 and D155 each contribute to the D-glucose 6-phosphate site. Residues R297 and K302 each contribute to the UDP-alpha-D-glucose site. R335 is a D-glucose 6-phosphate binding site. L400–E404 lines the UDP-alpha-D-glucose pocket.

It belongs to the glycosyltransferase 20 family. As to quaternary structure, homotetramer.

The enzyme catalyses ADP-alpha-D-glucose + D-glucose 6-phosphate = alpha,alpha-trehalose 6-phosphate + ADP + H(+). It carries out the reaction CDP-alpha-D-glucose + D-glucose 6-phosphate = alpha,alpha-trehalose 6-phosphate + CDP + H(+). It catalyses the reaction GDP-alpha-D-glucose + D-glucose 6-phosphate = alpha,alpha-trehalose 6-phosphate + GDP + H(+). The catalysed reaction is TDP-alpha-D-glucose + D-glucose 6-phosphate = 5-methyl-UDP + alpha,alpha-trehalose 6-phosphate + H(+). The enzyme catalyses D-glucose 6-phosphate + UDP-alpha-D-glucose = alpha,alpha-trehalose 6-phosphate + UDP + H(+). It functions in the pathway glycan biosynthesis; trehalose biosynthesis. Probably involved in the osmoprotection via the biosynthesis of trehalose and in the production of glycogen and alpha-glucan via the TreS-Pep2 branch involved in the biosynthesis of maltose-1-phosphate (M1P). Catalyzes the transfer of glucose from UDP-glucose (UDP-Glc) to D-glucose 6-phosphate (Glc-6-P) to form trehalose-6-phosphate. Probably also able to use ADP-Glc, CDP-Glc, GDP-Glc and TDP-Glc as glucosyl donors. In Mycobacterium avium (strain 104), this protein is Trehalose-6-phosphate synthase.